The sequence spans 603 residues: Polypeptide N-acetylgalactosaminyltransferase 10 (603 aa).

The Cytoplasmic segment spans residues 1–11 (MRRKEKRLLQA). The chain crosses the membrane as a helical; Signal-anchor for type II membrane protein span at residues 12-31 (VALALAALVLLPNVGLWALY). The Lumenal segment spans residues 32–603 (RERQPDGSPG…STVLENFNKN (572 aa)). 2 N-linked (GlcNAc...) asparagine glycosylation sites follow: asparagine 124 and asparagine 146. 5 cysteine pairs are disulfide-bonded: cysteine 135–cysteine 365, cysteine 356–cysteine 432, cysteine 471–cysteine 488, cysteine 523–cysteine 538, and cysteine 563–cysteine 578. The interval 144-253 (LPNTSIIIPF…VNWLPPLLDR (110 aa)) is catalytic subdomain A. Residues aspartate 185 and arginine 214 each contribute to the substrate site. Aspartate 237 serves as a coordination point for Mn(2+). Serine 238 provides a ligand contact to substrate. Histidine 239 is a Mn(2+) binding site. Positions 311–373 (PFESPVMAGG…PCSRVGHIYR (63 aa)) are catalytic subdomain B. Substrate is bound at residue tryptophan 342. Mn(2+) is bound at residue histidine 370. The substrate site is built by arginine 373 and tyrosine 378. The tract at residues 373–384 (RKYVPYKVPAGV) is flexible loop. In terms of domain architecture, Ricin B-type lectin spans 458–590 (AAWGEIRNVG…SSLTQQWLFE (133 aa)). N-linked (GlcNAc...) asparagine glycosylation is present at asparagine 593.

Belongs to the glycosyltransferase 2 family. GalNAc-T subfamily. Mn(2+) is required as a cofactor. Expressed at higher level than GALNT9. In the developing hindbrain region of 14.5 dpc embryos it accumulates in the rapidly dividing, undifferentiated ventricular zone adjacent to the pons. It also accumulates in the regions immediately rostral and caudal to the dorsal rhombic lips differentiating into the cerebellum. Not expressed in the developing choroid plexus.

Its subcellular location is the golgi apparatus membrane. It carries out the reaction L-seryl-[protein] + UDP-N-acetyl-alpha-D-galactosamine = a 3-O-[N-acetyl-alpha-D-galactosaminyl]-L-seryl-[protein] + UDP + H(+). The catalysed reaction is L-threonyl-[protein] + UDP-N-acetyl-alpha-D-galactosamine = a 3-O-[N-acetyl-alpha-D-galactosaminyl]-L-threonyl-[protein] + UDP + H(+). It participates in protein modification; protein glycosylation. Functionally, catalyzes the initial reaction in O-linked oligosaccharide biosynthesis, the transfer of an N-acetyl-D-galactosamine residue to a serine or threonine residue on the protein receptor. Has activity toward Muc5Ac and EA2 peptide substrates. The sequence is that of Polypeptide N-acetylgalactosaminyltransferase 10 (Galnt10) from Mus musculus (Mouse).